The sequence spans 113 residues: U11-theraphotoxin-Hhn1a (113 aa).

Residues 1–21 (MNTVRVTFLLVFVLAVSLGQA) form the signal peptide. A propeptide spanning residues 22–74 (DKDENRMEMQEKTEQGKSYLDFAENLLLQKLEELEAKPLEEDSEESRNSRQKR) is cleaved from the precursor. A compositionally biased stretch (basic and acidic residues) spans 57–69 (AKPLEEDSEESRN). Residues 57-83 (AKPLEEDSEESRNSRQKRCIGEGVPCD) form a disordered region. 3 disulfide bridges follow: Cys-75–Cys-90, Cys-82–Cys-95, and Cys-89–Cys-110.

It belongs to the neurotoxin 14 (magi-1) family. 01 (HNTX-16) subfamily. In terms of tissue distribution, expressed by the venom gland.

The protein localises to the secreted. Functionally, probable ion channel inhibitor. The protein is U11-theraphotoxin-Hhn1a of Cyriopagopus hainanus (Chinese bird spider).